A 319-amino-acid polypeptide reads, in one-letter code: Cytochrome c biogenesis protein CcsA (319 aa).

A run of 8 helical transmembrane segments spans residues 15–35 (FSIVSIVITIHLITLVVNKIV), 44–64 (GMILTFSCITGLLVIRWIFAG), 71–91 (LYESLIFLSWSFYIIHMIPYF), 96–116 (LSAITAPGAIFTQGFATSGFF), 141–161 (MILAYAALLCGSLLSVALLVI), 223–243 (VISLGFLFLTMGILSGAVWAN), 258–278 (WAFITWTIFAIYLHIKTNINL), and 284–304 (AIVASIGFLIIWICYFGVNLL).

This sequence belongs to the CcmF/CycK/Ccl1/NrfE/CcsA family. In terms of assembly, may interact with Ccs1.

Its subcellular location is the plastid. The protein localises to the chloroplast thylakoid membrane. Functionally, required during biogenesis of c-type cytochromes (cytochrome c6 and cytochrome f) at the step of heme attachment. This Fagopyrum esculentum subsp. ancestrale (Wild buckwheat) protein is Cytochrome c biogenesis protein CcsA.